The primary structure comprises 687 residues: Elongation factor G (687 aa).

One can recognise a tr-type G domain in the interval 8 to 282 (NKFRNIGIMA…AVLAYLPSPL (275 aa)). GTP is bound by residues 17–24 (AHIDAGKT), 81–85 (DTPGH), and 135–138 (NKMD).

This sequence belongs to the TRAFAC class translation factor GTPase superfamily. Classic translation factor GTPase family. EF-G/EF-2 subfamily.

The protein resides in the cytoplasm. In terms of biological role, catalyzes the GTP-dependent ribosomal translocation step during translation elongation. During this step, the ribosome changes from the pre-translocational (PRE) to the post-translocational (POST) state as the newly formed A-site-bound peptidyl-tRNA and P-site-bound deacylated tRNA move to the P and E sites, respectively. Catalyzes the coordinated movement of the two tRNA molecules, the mRNA and conformational changes in the ribosome. This chain is Elongation factor G, found in Clostridium novyi (strain NT).